A 50-amino-acid chain; its full sequence is Small ribosomal subunit protein eS31 (50 aa).

Positions 22, 25, 40, and 43 each coordinate Zn(2+). The segment at Cys22 to Cys43 adopts a C4-type zinc-finger fold.

The protein belongs to the eukaryotic ribosomal protein eS31 family. As to quaternary structure, part of the 30S ribosomal subunit. It depends on Zn(2+) as a cofactor.

The protein is Small ribosomal subunit protein eS31 of Pyrococcus horikoshii (strain ATCC 700860 / DSM 12428 / JCM 9974 / NBRC 100139 / OT-3).